We begin with the raw amino-acid sequence, 130 residues long: Small ribosomal subunit protein uS9 (130 aa).

The interval aspartate 107–arginine 130 is disordered. Residues valine 111–arginine 130 are compositionally biased toward basic residues.

It belongs to the universal ribosomal protein uS9 family.

The protein is Small ribosomal subunit protein uS9 of Streptococcus sanguinis (strain SK36).